Here is a 648-residue protein sequence, read N- to C-terminus: PAN2-PAN3 deadenylation complex subunit PAN3 (648 aa).

Positions 1–24 (MAATRYPPNDLRRQVGSPRSKGRE) are disordered. A C3H1-type zinc finger spans residues 24–53 (ENKDTLCRNILIYGNCRYEDQGCTFNHDQN). The pseudokinase domain stretch occupies residues 244 to 506 (QVMPNSGLPQ…SIENFISGIA (263 aa)). Residues Arg-295, 345-352 (DYHPLSKT), and 404-405 (SK) each bind ATP. Residues 507 to 545 (THMTAFFDLALQDGDEKQFHLARELENGRIARSMMKLMT) adopt a coiled-coil conformation. Residues 546–648 (IIERAEPGGA…SKTGAPGANN (103 aa)) form a knob domain region.

This sequence belongs to the protein kinase superfamily. PAN3 family. As to quaternary structure, homodimer. Forms a heterotrimer with a catalytic subunit PAN2 to form the poly(A)-nuclease (PAN) deadenylation complex. Interacts (via PAM-2 motif) with poly(A)-binding protein PAB1 (via PABC domain), conferring substrate specificity of the enzyme complex.

The protein resides in the cytoplasm. Regulatory subunit of the poly(A)-nuclease (PAN) deadenylation complex, one of two cytoplasmic mRNA deadenylases involved in mRNA turnover. PAN specifically shortens poly(A) tails of RNA and the activity is stimulated by poly(A)-binding protein PAB1. PAN deadenylation is followed by rapid degradation of the shortened mRNA tails by the CCR4-NOT complex. Deadenylated mRNAs are then degraded by two alternative mechanisms, namely exosome-mediated 3'-5' exonucleolytic degradation, or deadenylation-dependent mRNA decaping and subsequent 5'-3' exonucleolytic degradation by XRN1. May also be involved in post-transcriptional maturation of mRNA poly(A) tails. PAN3 acts as a positive regulator for PAN activity, recruiting the catalytic subunit PAN2 to mRNA via its interaction with RNA and with PAB1. In Chaetomium globosum (strain ATCC 6205 / CBS 148.51 / DSM 1962 / NBRC 6347 / NRRL 1970) (Soil fungus), this protein is PAN2-PAN3 deadenylation complex subunit PAN3.